Reading from the N-terminus, the 62-residue chain is Photosystem II reaction center protein Z (62 aa).

Helical transmembrane passes span 8–28 (ALAALVILSFAMIVGVPVAYA) and 41–61 (FLGSGVWIGLVLVVAALNFLV).

This sequence belongs to the PsbZ family. As to quaternary structure, PSII is composed of 1 copy each of membrane proteins PsbA, PsbB, PsbC, PsbD, PsbE, PsbF, PsbH, PsbI, PsbJ, PsbK, PsbL, PsbM, PsbT, PsbX, PsbY, PsbZ, Psb30/Ycf12, peripheral proteins PsbO, CyanoQ (PsbQ), PsbU, PsbV and a large number of cofactors. It forms dimeric complexes.

The protein localises to the cellular thylakoid membrane. Functionally, may control the interaction of photosystem II (PSII) cores with the light-harvesting antenna, regulates electron flow through the 2 photosystem reaction centers. PSII is a light-driven water plastoquinone oxidoreductase, using light energy to abstract electrons from H(2)O, generating a proton gradient subsequently used for ATP formation. This chain is Photosystem II reaction center protein Z, found in Cyanothece sp. (strain PCC 7425 / ATCC 29141).